A 158-amino-acid polypeptide reads, in one-letter code: Endoribonuclease YbeY (158 aa).

Zn(2+)-binding residues include H124, H128, and H134.

The protein belongs to the endoribonuclease YbeY family. Zn(2+) serves as cofactor.

The protein localises to the cytoplasm. Its function is as follows. Single strand-specific metallo-endoribonuclease involved in late-stage 70S ribosome quality control and in maturation of the 3' terminus of the 16S rRNA. The chain is Endoribonuclease YbeY from Caldicellulosiruptor saccharolyticus (strain ATCC 43494 / DSM 8903 / Tp8T 6331).